The primary structure comprises 1453 residues: DNA mismatch repair protein Mlh3 (1453 aa).

Disordered regions lie at residues 624-650 (EHSF…RHSV) and 933-960 (GVIP…SNTT). The segment covering 935 to 944 (IPTSDSATQD) has biased composition (polar residues). Low complexity predominate over residues 945 to 960 (NSFNKNSKTHSNSNTT).

This sequence belongs to the DNA mismatch repair MutL/HexB family. In terms of assembly, heterodimer of MLH1 and MLH3. Interacts with MTMR15/FAN1. In terms of tissue distribution, ubiquitous.

It is found in the nucleus. Its function is as follows. Probably involved in the repair of mismatches in DNA. In Homo sapiens (Human), this protein is DNA mismatch repair protein Mlh3 (MLH3).